A 111-amino-acid chain; its full sequence is uncharacterized protein (111 aa).

This is an uncharacterized protein from Aquifex aeolicus (strain VF5).